Consider the following 313-residue polypeptide: MKDHQKIILVGDGAVGSSYAFACVNLSIGQEFGIIDIDKDRTIGDAMDLSHAVPFSTPKKIYSANYSDCHDADLVVVTAGTAQKPGETRLDLVNRNIKIMKGIVDEVMASGFDGIFLIASNPVDILTYATWKFSGLPKERVIGSGTSLDTARFRMSIADYLKVDARNVHGYILGEHGDTQFPAWSHTTVGGLPITEWINEDEQGAMDTIFVSVRDAAYEIINKKGATFYGVAAALARITKAILNNENAILPLSVYLDGHYGMNDIYIGAPAVVNRQGVRHIVEMNLNDKEKEQMKNSADTLKKVLDDAMKQID.

NAD(+)-binding residues include Val15, Asp36, Arg41, and Tyr66. Residues Gln83, Arg89, and Asn121 to Asp124 each bind substrate. NAD(+) contacts are provided by residues Ala119 to Asn121 and Ser144. A substrate-binding site is contributed by Asp149–Arg152. Beta-D-fructose 1,6-bisphosphate is bound by residues Arg154 and His169. Catalysis depends on His176, which acts as the Proton acceptor. At Tyr218 the chain carries Phosphotyrosine. Position 227 (Thr227) interacts with substrate.

This sequence belongs to the LDH/MDH superfamily. LDH family. In terms of assembly, homotetramer.

The protein localises to the cytoplasm. The catalysed reaction is (S)-lactate + NAD(+) = pyruvate + NADH + H(+). It participates in fermentation; pyruvate fermentation to lactate; (S)-lactate from pyruvate: step 1/1. With respect to regulation, allosterically activated by fructose 1,6-bisphosphate (FBP). In terms of biological role, catalyzes the conversion of lactate to pyruvate. This Listeria innocua serovar 6a (strain ATCC BAA-680 / CLIP 11262) protein is L-lactate dehydrogenase 1.